The following is a 267-amino-acid chain: 5'-nucleotidase SurE (267 aa).

4 residues coordinate a divalent metal cation: D9, D10, S40, and N97.

Belongs to the SurE nucleotidase family. Requires a divalent metal cation as cofactor.

It localises to the cytoplasm. It catalyses the reaction a ribonucleoside 5'-phosphate + H2O = a ribonucleoside + phosphate. Nucleotidase that shows phosphatase activity on nucleoside 5'-monophosphates. The polypeptide is 5'-nucleotidase SurE (Helicobacter pylori (strain HPAG1)).